A 103-amino-acid chain; its full sequence is Small ribosomal subunit protein uS10 (103 aa).

It belongs to the universal ribosomal protein uS10 family. In terms of assembly, part of the 30S ribosomal subunit.

Involved in the binding of tRNA to the ribosomes. This is Small ribosomal subunit protein uS10 from Borrelia recurrentis (strain A1).